Here is a 74-residue protein sequence, read N- to C-terminus: U4-theraphotoxin-Cg1a (74 aa).

An N-terminal signal peptide occupies residues methionine 1 to alanine 19. Residues alanine 20–arginine 39 constitute a propeptide that is removed on maturation. Cystine bridges form between cysteine 42/cysteine 56, cysteine 49/cysteine 61, and cysteine 55/cysteine 71.

It belongs to the neurotoxin 36 family. 01 subfamily. In terms of tissue distribution, expressed by the venom gland.

It is found in the secreted. Probable ion channel inhibitor. The polypeptide is U4-theraphotoxin-Cg1a (Chilobrachys guangxiensis (Chinese earth tiger tarantula)).